The chain runs to 538 residues: Metal transporter Nramp5 (538 aa).

The next 12 helical transmembrane spans lie at 44–64 (FLAH…PGNL), 77–97 (ELLW…SLAA), 118–138 (FVKI…DIPE), 140–160 (IGTA…GVLI), 181–201 (FLIS…LSIV), 227–247 (IALL…ALVL), 264–284 (FFLY…IAVV), 324–346 (SAIV…GTYA), 365–385 (NLMT…IGGS), 391–411 (LIII…IPLL), 427–447 (IYII…NMYF), and 467–487 (VLVG…VVYL). Residues 518–538 (AVDDDEPLPYRDDLADIPLPR) are disordered.

The protein belongs to the NRAMP (TC 2.A.55) family.

The protein resides in the membrane. Functionally, probable metal transporter. The polypeptide is Metal transporter Nramp5 (NRAMP5) (Oryza sativa subsp. japonica (Rice)).